A 226-amino-acid chain; its full sequence is Ethylene-responsive transcription factor-like protein At4g13040 (226 aa).

2 disordered regions span residues 63-109 (EERS…RKRV) and 195-226 (KKPKSRIEHEDTKINASMPHQPEEEEQDSDKM). Basic residues predominate over residues 97–109 (PPKRRKQHRRKRV). Positions 105-171 (RRKRVHNQEP…REPNFELSEE (67 aa)) form a DNA-binding region, AP2/ERF. Residues 217–226 (EEEEQDSDKM) are compositionally biased toward acidic residues.

Belongs to the AP2/ERF transcription factor family.

It localises to the nucleus. In terms of biological role, probably acts as a transcriptional activator. Binds to the GCC-box pathogenesis-related promoter element. May be involved in the regulation of gene expression by stress factors and by components of stress signal transduction pathways. This is Ethylene-responsive transcription factor-like protein At4g13040 from Arabidopsis thaliana (Mouse-ear cress).